The sequence spans 194 residues: Imidazoleglycerol-phosphate dehydratase (194 aa).

It belongs to the imidazoleglycerol-phosphate dehydratase family.

The protein resides in the cytoplasm. The catalysed reaction is D-erythro-1-(imidazol-4-yl)glycerol 3-phosphate = 3-(imidazol-4-yl)-2-oxopropyl phosphate + H2O. It functions in the pathway amino-acid biosynthesis; L-histidine biosynthesis; L-histidine from 5-phospho-alpha-D-ribose 1-diphosphate: step 6/9. The protein is Imidazoleglycerol-phosphate dehydratase of Streptococcus gordonii (strain Challis / ATCC 35105 / BCRC 15272 / CH1 / DL1 / V288).